The primary structure comprises 483 residues: ATP synthase subunit beta (483 aa).

168–175 (GGAGVGKT) contributes to the ATP binding site.

Belongs to the ATPase alpha/beta chains family. F-type ATPases have 2 components, CF(1) - the catalytic core - and CF(0) - the membrane proton channel. CF(1) has five subunits: alpha(3), beta(3), gamma(1), delta(1), epsilon(1). CF(0) has three main subunits: a(1), b(2) and c(9-12). The alpha and beta chains form an alternating ring which encloses part of the gamma chain. CF(1) is attached to CF(0) by a central stalk formed by the gamma and epsilon chains, while a peripheral stalk is formed by the delta and b chains.

It is found in the cell membrane. It carries out the reaction ATP + H2O + 4 H(+)(in) = ADP + phosphate + 5 H(+)(out). In terms of biological role, produces ATP from ADP in the presence of a proton gradient across the membrane. The catalytic sites are hosted primarily by the beta subunits. This Mycobacterium ulcerans (strain Agy99) protein is ATP synthase subunit beta.